The following is a 145-amino-acid chain: 3-dehydroquinate dehydratase (145 aa).

Catalysis depends on Tyr-22, which acts as the Proton acceptor. 3 residues coordinate substrate: Asn-74, His-80, and Asp-87. The active-site Proton donor is His-100. Substrate-binding positions include 101–102 and Arg-111; that span reads IS.

This sequence belongs to the type-II 3-dehydroquinase family. In terms of assembly, homododecamer.

The enzyme catalyses 3-dehydroquinate = 3-dehydroshikimate + H2O. It participates in metabolic intermediate biosynthesis; chorismate biosynthesis; chorismate from D-erythrose 4-phosphate and phosphoenolpyruvate: step 3/7. In terms of biological role, catalyzes a trans-dehydration via an enolate intermediate. In Lachnoclostridium phytofermentans (strain ATCC 700394 / DSM 18823 / ISDg) (Clostridium phytofermentans), this protein is 3-dehydroquinate dehydratase.